A 403-amino-acid polypeptide reads, in one-letter code: Imidazolonepropionase (403 aa).

His-69 and His-71 together coordinate Fe(3+). Residues His-69 and His-71 each coordinate Zn(2+). Arg-78, Tyr-141, and His-174 together coordinate 4-imidazolone-5-propanoate. Tyr-141 provides a ligand contact to N-formimidoyl-L-glutamate. His-239 lines the Fe(3+) pocket. His-239 serves as a coordination point for Zn(2+). Gln-242 provides a ligand contact to 4-imidazolone-5-propanoate. A Fe(3+)-binding site is contributed by Asp-314. Residue Asp-314 participates in Zn(2+) binding. N-formimidoyl-L-glutamate-binding residues include Asn-316 and Gly-318. Ser-319 is a 4-imidazolone-5-propanoate binding site.

It belongs to the metallo-dependent hydrolases superfamily. HutI family. It depends on Zn(2+) as a cofactor. The cofactor is Fe(3+).

Its subcellular location is the cytoplasm. The enzyme catalyses 4-imidazolone-5-propanoate + H2O = N-formimidoyl-L-glutamate. It participates in amino-acid degradation; L-histidine degradation into L-glutamate; N-formimidoyl-L-glutamate from L-histidine: step 3/3. Functionally, catalyzes the hydrolytic cleavage of the carbon-nitrogen bond in imidazolone-5-propanoate to yield N-formimidoyl-L-glutamate. It is the third step in the universal histidine degradation pathway. In Legionella pneumophila (strain Corby), this protein is Imidazolonepropionase.